Reading from the N-terminus, the 99-residue chain is UPF0751 protein BCAH820_B0138 (99 aa).

The protein belongs to the UPF0751 family.

The sequence is that of UPF0751 protein BCAH820_B0138 from Bacillus cereus (strain AH820).